Consider the following 554-residue polypeptide: 3-(3-hydroxy-phenyl)propionate/3-hydroxycinnamic acid hydroxylase (554 aa).

FAD is bound by residues 17–46 (QVAI…VVEK) and 285–295 (FRIDRVLLAGD).

It belongs to the PheA/TfdB FAD monooxygenase family. FAD is required as a cofactor.

It catalyses the reaction 3-(3-hydroxyphenyl)propanoate + NADH + O2 + H(+) = 3-(2,3-dihydroxyphenyl)propanoate + NAD(+) + H2O. The enzyme catalyses (2E)-3-(3-hydroxyphenyl)prop-2-enoate + NADH + O2 + H(+) = (2E)-3-(2,3-dihydroxyphenyl)prop-2-enoate + NAD(+) + H2O. The protein operates within aromatic compound metabolism; 3-phenylpropanoate degradation. Catalyzes the insertion of one atom of molecular oxygen into position 2 of the phenyl ring of 3-(3-hydroxyphenyl)propionate (3-HPP) and hydroxycinnamic acid (3HCI). This is 3-(3-hydroxy-phenyl)propionate/3-hydroxycinnamic acid hydroxylase from Escherichia coli O157:H7.